A 248-amino-acid polypeptide reads, in one-letter code: Myelin protein P0 (248 aa).

An N-terminal signal peptide occupies residues methionine 1 to glutamine 28. Residues alanine 29–glycine 155 lie on the Extracellular side of the membrane. In terms of domain architecture, Ig-like V-type spans isoleucine 30 to threonine 143. Cysteines 50 and 127 form a disulfide. The N-linked (GlcNAc...) (complex) asparagine glycan is linked to asparagine 122. Residues valine 156–phenylalanine 176 traverse the membrane as a helical segment. Residues tyrosine 177–lysine 248 are Cytoplasmic-facing. A Phosphoserine; by PKC modification is found at serine 210. The interval aspartate 224 to lysine 248 is disordered. Phosphoserine is present on residues serine 226 and serine 228. A phosphoserine; by PKC mark is found at serine 233 and serine 243.

Belongs to the myelin P0 protein family. In terms of assembly, homodimer and homotetramer. N-glycosylated; contains sulfate-substituted glycan. In terms of tissue distribution, found only in peripheral nervous system Schwann cells.

The protein resides in the cell membrane. In terms of biological role, is an adhesion molecule necessary for normal myelination in the peripheral nervous system. It mediates adhesion between adjacent myelin wraps and ultimately drives myelin compaction. The chain is Myelin protein P0 (MPZ) from Bos taurus (Bovine).